The following is a 735-amino-acid chain: Putative RNA polymerase II subunit B1 CTD phosphatase RPAP2 homolog (735 aa).

Residues Ala-33–Asp-118 form an RTR1-type zinc finger. Positions 56, 61, 94, and 98 each coordinate Zn(2+). Disordered regions lie at residues Val-179–His-201, Gly-349–Lys-374, and Glu-519–Lys-538. The span at Gly-349–Gly-364 shows a compositional bias: low complexity. Positions Glu-519–Pro-530 are enriched in acidic residues.

This sequence belongs to the RPAP2 family.

The protein resides in the nucleus. The catalysed reaction is O-phospho-L-seryl-[protein] + H2O = L-seryl-[protein] + phosphate. It catalyses the reaction O-phospho-L-threonyl-[protein] + H2O = L-threonyl-[protein] + phosphate. Functionally, putative RNA polymerase II subunit B1 C-terminal domain (CTD) phosphatase involved in RNA polymerase II transcription regulation. This is Putative RNA polymerase II subunit B1 CTD phosphatase RPAP2 homolog from Arabidopsis thaliana (Mouse-ear cress).